A 406-amino-acid polypeptide reads, in one-letter code: Sorting nexin-6 (406 aa).

N-acetylmethionine is present on M1. M2 is modified (N-acetylmethionine; in Sorting nexin-6, N-terminally processed). The interaction with PIM1 stretch occupies residues 2–179 (MEGLDDGPDF…NQDLSVRGKN (178 aa)). In terms of domain architecture, PX spans 26 to 173 (LQSDAALQVD…HVFLEYNQDL (148 aa)). Residues 41–47 (SERDRVK), 100–106 (FDASREK), and 114–117 (EGSM) each bind a 1,2-diacyl-sn-glycero-3-phospho-(1D-myo-inositol-4,5-bisphosphate). 2 positions are modified to phosphoserine: S116 and S194. The tract at residues 182–199 (EKLEDFFKNMVKSADGVI) is membrane-binding amphipathic helix. In terms of domain architecture, BAR spans 203–406 (VKDVDDFFEH…NCLAVLNGDT (204 aa)).

It belongs to the sorting nexin family. Forms heterodimers with BAR domain-containing sorting nexins SNX1 and SNX2. The heterodimers are proposed to self-assemble into helical arrays on the membrane to stabilize and expand local membrane curvature underlying endosomal tubule formation. Thought to be a component of the originally described retromer complex (also called SNX-BAR retromer) which is a pentamer containing the heterotrimeric retromer cargo-selective complex (CSC), also described as vacuolar protein sorting subcomplex (VPS), and a heterodimeric membrane-deforming subcomplex formed between SNX1 or SNX2 and SNX5 or SNX6 (also called SNX-BAR subcomplex); the respective CSC and SNX-BAR subcomplexes associate with low affinity. Interacts with SNX1, SNX2, VPS26A, VPS29, VPS35, TGFB receptors, BACE1, BRMS1, PIP5K1C. Interacts with DCTN1; the association with DCTN1 is involved in movement of retromer-c ontaining vesicles toward the TGN. Interacts with PIM1; translocating SNX6 to the nucleus. Interacts with CDKN1B and GIT1. Post-translationally, in vitro phosphorylated by PIM1; not affecting PIM1-dependent nuclear translocation.

The protein localises to the early endosome membrane. It is found in the cytoplasmic vesicle. Its subcellular location is the cytoplasm. The protein resides in the nucleus. In terms of biological role, involved in several stages of intracellular trafficking. Interacts with membranes phosphatidylinositol 3,4-bisphosphate and/or phosphatidylinositol 4,5-bisphosphate. Acts in part as component of the retromer membrane-deforming SNX-BAR subcomplex. The SNX-BAR retromer mediates retrograde transport of cargo proteins from endosomes to the trans-Golgi network (TGN) and is involved in endosome-to-plasma membrane transport for cargo protein recycling. The SNX-BAR subcomplex functions to deform the donor membrane into a tubular profile called endosome-to-TGN transport carrier (ETC). Does not have in vitro vesicle-to-membrane remodeling activity. Involved in retrograde endosome-to-TGN transport of lysosomal enzyme receptor IGF2R. May function as link between transport vesicles and dynactin. Negatively regulates retrograde transport of BACE1 from the cell surface to the trans-Golgi network. Involved in E-cadherin sorting and degradation; inhibits PIP5K1C-mediated E-cadherin degradation. In association with GIT1 involved in EGFR degradation. Promotes lysosomal degradation of CDKN1B. May contribute to transcription regulation. The protein is Sorting nexin-6 (Snx6) of Mus musculus (Mouse).